Reading from the N-terminus, the 495-residue chain is Protein YhjJ (495 aa).

The first 24 residues, 1–24 (MQGTKIRLLAGSLLMLASAGYVQA), serve as a signal peptide directing secretion.

It belongs to the peptidase M16 family.

The protein localises to the periplasm. The protein is Protein YhjJ (yhjJ) of Salmonella typhimurium (strain LT2 / SGSC1412 / ATCC 700720).